A 214-amino-acid chain; its full sequence is Exosome complex component RRP46 homolog (214 aa).

The protein belongs to the RNase PH family. As to quaternary structure, homodimer. Component of the RNA exosome complex. Interacts with crn-4; interaction promotes the DNase activity of crn-4. Interacts with crn-3, cps-6 and cyn-13.

The protein localises to the cytoplasm. Its subcellular location is the nucleus. Functionally, non-catalytic component of the RNA exosome complex which has 3'-&gt;5' exoribonuclease activity and participates in a multitude of cellular RNA processing and degradation events. Involved in apoptotic DNA degradation. In vitro, does not bind or digest single-stranded RNA. In vitro, binds to double-stranded DNA without detectable DNase activity. In Caenorhabditis elegans, this protein is Exosome complex component RRP46 homolog.